A 391-amino-acid polypeptide reads, in one-letter code: Recombination and repair protein (391 aa).

60 to 67 (GPSKSFKS) provides a ligand contact to ATP. Positions 364–374 (KSPESKSKSAA) are enriched in basic and acidic residues. Residues 364 to 391 (KSPESKSKSAADLETDLEQLSDMEEFNE) form a disordered region. Positions 376 to 391 (LETDLEQLSDMEEFNE) are enriched in acidic residues.

It belongs to the RecA family.

Its function is as follows. Important in genetic recombination, DNA repair, and replication. Possesses pairing and strand-transfer activity. Interacts with dda and gene 32 proteins. This chain is Recombination and repair protein (UVSX), found in Enterobacteria phage T4 (Bacteriophage T4).